Consider the following 208-residue polypeptide: Ribosomal RNA small subunit methyltransferase G (208 aa).

Residues glycine 76, leucine 81, 127–128 (VE), and arginine 142 each bind S-adenosyl-L-methionine.

This sequence belongs to the methyltransferase superfamily. RNA methyltransferase RsmG family.

The protein resides in the cytoplasm. It catalyses the reaction guanosine(527) in 16S rRNA + S-adenosyl-L-methionine = N(7)-methylguanosine(527) in 16S rRNA + S-adenosyl-L-homocysteine. Functionally, specifically methylates the N7 position of guanine in position 527 of 16S rRNA. In Legionella pneumophila (strain Corby), this protein is Ribosomal RNA small subunit methyltransferase G.